The primary structure comprises 582 residues: uncharacterized protein (582 aa).

The helical transmembrane segment at 20–40 (GFWALGLFGAAINAFSAVLIV) threads the bilayer.

The protein localises to the membrane. This is an uncharacterized protein from Mycoplasma pneumoniae (strain ATCC 29342 / M129 / Subtype 1) (Mycoplasmoides pneumoniae).